The sequence spans 458 residues: Tissue-resident T-cell transcription regulator protein ZNF683 (458 aa).

Disordered stretches follow at residues Pro84 to Glu109 and Thr249 to Arg275. 3 C2H2-type zinc fingers span residues Tyr301–His323, Phe329–His351, and His357–His379.

The protein belongs to the krueppel C2H2-type zinc-finger protein family. In terms of tissue distribution, expressed in tissue-resident memory T (Trm) cell population in non-lymphoid organs, such as skin and gut. Expressed in innate lymphocytes, including tissue-resident natural killer (trNK) and natural killer T (NKT) cells in thymus, spleen and liver.

The protein localises to the nucleus. In terms of biological role, transcription factor that mediates a transcriptional program in various innate and adaptive immune tissue-resident lymphocyte T-cell types such as tissue-resident memory T (Trm), natural killer (trNK) and natural killer T (NKT) cells and negatively regulates gene expression of proteins that promote the egress of tissue-resident T-cell populations from non-lymphoid organs. Plays a role in the development, retention and long-term establishment of adaptive and innate tissue-resident lymphocyte T-cell types in non-lymphoid organs, such as the skin and gut, but also in other nonbarrier tissues like liver and kidney, and therefore may provide immediate immunological protection against reactivating infections or viral reinfection. Also plays a role in the differentiation of both thymic and peripheral NKT cells. Negatively regulates the accumulation of interferon-gamma (IFN-gamma) in NKT cells at steady state or after antigenic stimulation. Positively regulates granzyme B production in NKT cells after innate stimulation. Associates with the transcriptional repressor PRDM1/BLIMP1 to chromatin at gene promoter regions. The sequence is that of Tissue-resident T-cell transcription regulator protein ZNF683 from Mus musculus (Mouse).